The primary structure comprises 247 residues: Calpain small subunit 2 (247 aa).

Alanine 88, aspartate 91, glutamate 93, aspartate 131, aspartate 133, threonine 135, lysine 137, glutamate 142, aspartate 161, aspartate 163, serine 165, and aspartate 204 together coordinate Ca(2+). EF-hand domains follow at residues 118-151 (FSLD…NNIK), 148-183 (NNIK…AGFQ), 184-212 (LNEQ…ISCL), and 213-247 (VRLD…TMYS).

Heterodimer of a large (catalytic) and a small (regulatory) subunit.

It is found in the cytoplasm. Its subcellular location is the cell membrane. Functionally, calcium-regulated non-lysosomal thiol-protease which catalyzes limited proteolysis of substrates involved in cytoskeletal remodeling and signal transduction. This small subunit may act as a tissue-specific chaperone of the large subunit, possibly by helping it fold into its correct conformation for activity. The chain is Calpain small subunit 2 (Capns2) from Mus musculus (Mouse).